The following is a 418-amino-acid chain: Peptide chain release factor subunit 1 (418 aa).

This sequence belongs to the eukaryotic release factor 1 family. As to quaternary structure, heterodimer of two subunits, one of which binds GTP.

The protein resides in the cytoplasm. In terms of biological role, directs the termination of nascent peptide synthesis (translation) in response to the termination codons UAA, UAG and UGA. This is Peptide chain release factor subunit 1 from Haloarcula marismortui (strain ATCC 43049 / DSM 3752 / JCM 8966 / VKM B-1809) (Halobacterium marismortui).